Reading from the N-terminus, the 430-residue chain is MRSLATLHQSPASCSRSAPVAPCPARRANSSRRVARQGPRARASSPVVETESEDVDITPQIDAFEELVRLAVEKDPSLATLAEQHLRSKSKSAAPVSPFAAPSPGSPSASSMLGPSLGALPNQNKPAWLRQRAPQGEIYSGLKDQLRGLKLATVCEEAQCPNIGECWNGELATATIMLLGDTCTRGCRFCAVNTARTPPPPDPNEPVNTATAVASWGVGYVVLTSVDRDDMPDGGSEHFAATVRTLKQLRPGILVECLTPDFKGDLDAVRHLARSGLDVYAHNVETVERLQKRVRDPRAGYMQTLDVLRAAKECGVYTKSSIMLGLGETDDEVIDTMLDLKAVGVDIFTLGQYLQPTPHHLPVTEFVTPEKFEYWRKFGQEEIGFRYVASGPMVRSSYKAGEFFLHSMIESDRAKARAAQEGAAGRVRPL.

Polar residues predominate over residues 1 to 16 (MRSLATLHQSPASCSR). The N-terminal 40 residues, 1–40 (MRSLATLHQSPASCSRSAPVAPCPARRANSSRRVARQGPR), are a transit peptide targeting the chloroplast. Disordered stretches follow at residues 1–55 (MRSL…SEDV) and 85–119 (HLRSKSKSAAPVSPFAAPSPGSPSASSMLGPSLGA). Over residues 91–119 (KSAAPVSPFAAPSPGSPSASSMLGPSLGA) the composition is skewed to low complexity. [4Fe-4S] cluster-binding residues include Cys-155, Cys-160, Cys-166, Cys-183, Cys-187, Cys-190, and Ser-397. Residues 166 to 386 (CWNGELATAT…KFGQEEIGFR (221 aa)) enclose the Radical SAM core domain.

It belongs to the radical SAM superfamily. Lipoyl synthase family. It depends on [4Fe-4S] cluster as a cofactor.

The protein localises to the plastid. It is found in the chloroplast. It carries out the reaction [[Fe-S] cluster scaffold protein carrying a second [4Fe-4S](2+) cluster] + N(6)-octanoyl-L-lysyl-[protein] + 2 oxidized [2Fe-2S]-[ferredoxin] + 2 S-adenosyl-L-methionine + 4 H(+) = [[Fe-S] cluster scaffold protein] + N(6)-[(R)-dihydrolipoyl]-L-lysyl-[protein] + 4 Fe(3+) + 2 hydrogen sulfide + 2 5'-deoxyadenosine + 2 L-methionine + 2 reduced [2Fe-2S]-[ferredoxin]. It functions in the pathway protein modification; protein lipoylation via endogenous pathway; protein N(6)-(lipoyl)lysine from octanoyl-[acyl-carrier-protein]: step 2/2. Functionally, catalyzes the radical-mediated insertion of two sulfur atoms into the C-6 and C-8 positions of the octanoyl moiety bound to the lipoyl domains of lipoate-dependent enzymes, thereby converting the octanoylated domains into lipoylated derivatives. The chain is Lipoyl synthase, chloroplastic from Chlamydomonas reinhardtii (Chlamydomonas smithii).